A 333-amino-acid chain; its full sequence is MEEPPEGHGHHRDAAPPGPANGGGGGGGGSDGDSAPVSPSPAPASPAAPCPLPLPRRRPPPPPPPRTTNFFIDNILRPDFGCKKEPPAATGAATGAGGGGGGGGREQRDGAQSAGRENVNPLLARPPHAPSSALLCPDSNCAPDGSAPAGTAAKANPGTAAGAAGAAGAAKAQGDGGETPAAKYGEHGSPAILLMGSNNGGAVLKPDSQQPLVWPAWVYCTRYSDRPSSPRTRKLKKKKTEKEDKRPRTAFTAEQLQRLKAEFQANRYITEQRRQSLAQELSLNESRVKIWFQNKRAKIKKATGIKNGLALHLMAQGLYNHSTTTVQDKEESE.

Positions 1–14 (MEEPPEGHGHHRDA) are enriched in basic and acidic residues. 2 disordered regions span residues 1–184 (MEEP…AAKY) and 226–247 (RPSS…DKRP). Positions 20–31 (ANGGGGGGGGSD) are enriched in gly residues. Residues 38–66 (SPSPAPASPAAPCPLPLPRRRPPPPPPPR) are compositionally biased toward pro residues. Residues 94–104 (TGAGGGGGGGG) are compositionally biased toward gly residues. Residues 144–173 (DGSAPAGTAAKANPGTAAGAAGAAGAAKAQ) are compositionally biased toward low complexity. The segment at residues 244 to 303 (DKRPRTAFTAEQLQRLKAEFQANRYITEQRRQSLAQELSLNESRVKIWFQNKRAKIKKAT) is a DNA-binding region (homeobox).

Belongs to the engrailed homeobox family.

The protein resides in the nucleus. Functionally, required for proper formation of the apical ectodermal ridge and correct dorsal-ventral patterning in the limb. In Gallus gallus (Chicken), this protein is Homeobox protein engrailed-1 (EN1).